We begin with the raw amino-acid sequence, 124 residues long: Competence protein ComGG (124 aa).

Residues Met-1–Ala-28 form the signal peptide.

The transformation pili are flexible filaments, consisting mainly of the major pilin ComGC and smaller amounts of the minor pilins, including at least ComGD, ComGF and ComGG. Interacts with ComGC; the interaction is probably direct. Interacts with ComGD. Interacts with ComGF. May act as a link between ComGC, ComGD and ComGF. Homodimer; disulfide-linked. A minor fraction of ComGG is found as a disulfide-bonded homodimer. In terms of processing, partial processing of ComGG in competent cells requires ComC.

The protein localises to the cell membrane. The protein resides in the secreted. Functionally, required for formation of the type IV-like pilus (T4P) that plays a role in transformation. Transformation pili are dynamically extended and retracted, perhaps thereby promoting DNA uptake and transformation. Required for transformation and DNA binding. This Bacillus subtilis (strain 168) protein is Competence protein ComGG (comGG).